The primary structure comprises 133 residues: Large ribosomal subunit protein uL14 (133 aa).

This sequence belongs to the universal ribosomal protein uL14 family. As to quaternary structure, part of the 50S ribosomal subunit. Forms a cluster with proteins L3 and L24e, part of which may contact the 16S rRNA in 2 intersubunit bridges.

Binds to 23S rRNA. Forms part of two intersubunit bridges in the 70S ribosome. The sequence is that of Large ribosomal subunit protein uL14 from Methanopyrus kandleri (strain AV19 / DSM 6324 / JCM 9639 / NBRC 100938).